Reading from the N-terminus, the 477-residue chain is Aspartyl/glutamyl-tRNA(Asn/Gln) amidotransferase subunit B (477 aa).

This sequence belongs to the GatB/GatE family. GatB subfamily. In terms of assembly, heterotrimer of A, B and C subunits.

The enzyme catalyses L-glutamyl-tRNA(Gln) + L-glutamine + ATP + H2O = L-glutaminyl-tRNA(Gln) + L-glutamate + ADP + phosphate + H(+). The catalysed reaction is L-aspartyl-tRNA(Asn) + L-glutamine + ATP + H2O = L-asparaginyl-tRNA(Asn) + L-glutamate + ADP + phosphate + 2 H(+). Functionally, allows the formation of correctly charged Asn-tRNA(Asn) or Gln-tRNA(Gln) through the transamidation of misacylated Asp-tRNA(Asn) or Glu-tRNA(Gln) in organisms which lack either or both of asparaginyl-tRNA or glutaminyl-tRNA synthetases. The reaction takes place in the presence of glutamine and ATP through an activated phospho-Asp-tRNA(Asn) or phospho-Glu-tRNA(Gln). The sequence is that of Aspartyl/glutamyl-tRNA(Asn/Gln) amidotransferase subunit B from Sulfurovum sp. (strain NBC37-1).